The chain runs to 107 residues: Phosphoribosyl-ATP pyrophosphatase (107 aa).

The protein belongs to the PRA-PH family.

Its subcellular location is the cytoplasm. The enzyme catalyses 1-(5-phospho-beta-D-ribosyl)-ATP + H2O = 1-(5-phospho-beta-D-ribosyl)-5'-AMP + diphosphate + H(+). It functions in the pathway amino-acid biosynthesis; L-histidine biosynthesis; L-histidine from 5-phospho-alpha-D-ribose 1-diphosphate: step 2/9. The protein is Phosphoribosyl-ATP pyrophosphatase of Bacillus cereus (strain G9842).